We begin with the raw amino-acid sequence, 183 residues long: Apo-citrate lyase phosphoribosyl-dephospho-CoA transferase (183 aa).

It belongs to the CitX family.

It carries out the reaction apo-[citrate lyase ACP] + 2'-(5''-triphospho-alpha-D-ribosyl)-3'-dephospho-CoA = holo-[citrate lyase ACP] + diphosphate. Functionally, transfers 2-(5''-triphosphoribosyl)-3'-dephosphocoenzyme-A on a serine residue to the apo-acyl carrier protein (gamma chain) of the citrate lyase to yield holo-acyl carrier protein. This chain is Apo-citrate lyase phosphoribosyl-dephospho-CoA transferase, found in Shigella flexneri serotype 5b (strain 8401).